The primary structure comprises 222 residues: Small ribosomal subunit protein eS1 (222 aa).

The protein belongs to the eukaryotic ribosomal protein eS1 family.

The chain is Small ribosomal subunit protein eS1 from Pyrobaculum islandicum (strain DSM 4184 / JCM 9189 / GEO3).